A 390-amino-acid polypeptide reads, in one-letter code: GDSL esterase/lipase At1g28580 (390 aa).

A signal peptide spans 1–28 (MAYPGSPILMKLLVFIFLSTFVVTNVSS). Catalysis depends on serine 44, which acts as the Nucleophile. N-linked (GlcNAc...) asparagine glycosylation is found at asparagine 140 and asparagine 322. Catalysis depends on residues aspartate 347 and histidine 350.

Belongs to the 'GDSL' lipolytic enzyme family.

The protein localises to the secreted. The protein is GDSL esterase/lipase At1g28580 of Arabidopsis thaliana (Mouse-ear cress).